The chain runs to 336 residues: Cinnamoyl-CoA reductase 2 (336 aa).

NADP(+)-binding positions include 21 to 27 (GAGGFIA), Arg46, Lys52, 72 to 73 (DL), 92 to 94 (TAS), Tyr165, Lys169, 192 to 195 (PVVV), and Ser207. The cysteines at positions 158 and 166 are disulfide-linked. Catalysis depends on Lys169, which acts as the Proton donor.

This sequence belongs to the NAD(P)-dependent epimerase/dehydratase family. Dihydroflavonol-4-reductase subfamily. Post-translationally, the formation of a reversible disulfide bond reduces activity by perturbing the positioning of nearby catalytic residues. In terms of tissue distribution, mainly expressed in roots and stems, especially at the second internode and, to a lower extent, in leaves and flowers. Localized in vascular elements, with weaker expression in the interfascicular (xylem fiber) region.

The protein resides in the cytoplasm. It catalyses the reaction (E)-coniferaldehyde + NADP(+) + CoA = (E)-feruloyl-CoA + NADPH + H(+). It carries out the reaction (E)-4-coumaraldehyde + NADP(+) + CoA = (E)-4-coumaroyl-CoA + NADPH + H(+). The catalysed reaction is (E)-sinapaldehyde + NADP(+) + CoA = (E)-sinapoyl-CoA + NADPH + H(+). The enzyme catalyses (E)-cinnamaldehyde + NADP(+) + CoA = (E)-cinnamoyl-CoA + NADPH + H(+). It catalyses the reaction (E)-caffeyl aldehyde + NADP(+) + CoA = (E)-caffeoyl-CoA + NADPH + H(+). The protein operates within aromatic compound metabolism; phenylpropanoid biosynthesis. Involved in the latter stages of lignin biosynthesis. Catalyzes one of the last steps of monolignol biosynthesis, the conversion of cinnamoyl-CoAs into their corresponding cinnamaldehydes. Mediates the conversion of caffeoyl-CoA and coumaroyl-CoA to caffaldehyde and coumaraldehyde, respectively. Also active, with a lower efficiency, toward feruloyl-CoA and sinapoyl-CoA. Involved in the production of floral volatile phenylpropanoids in flowers of fragrant cultivars from cinnamic acid, a common precursor with the anthocyanin biosynthesis pathway involved in flower pigmentation. This Medicago truncatula (Barrel medic) protein is Cinnamoyl-CoA reductase 2.